Consider the following 279-residue polypeptide: Shikimate dehydrogenase (NADP(+)) (279 aa).

Residues 19–21 and T66 contribute to the shikimate site; that span reads SRS. K70 acts as the Proton acceptor in catalysis. N91 and D106 together coordinate shikimate. Residues 129–133 and F222 contribute to the NADP(+) site; that span reads GAGGA. Shikimate is bound at residue Y224. G243 lines the NADP(+) pocket.

It belongs to the shikimate dehydrogenase family. Homodimer.

It carries out the reaction shikimate + NADP(+) = 3-dehydroshikimate + NADPH + H(+). It functions in the pathway metabolic intermediate biosynthesis; chorismate biosynthesis; chorismate from D-erythrose 4-phosphate and phosphoenolpyruvate: step 4/7. Involved in the biosynthesis of the chorismate, which leads to the biosynthesis of aromatic amino acids. Catalyzes the reversible NADPH linked reduction of 3-dehydroshikimate (DHSA) to yield shikimate (SA). The sequence is that of Shikimate dehydrogenase (NADP(+)) from Anaeromyxobacter sp. (strain Fw109-5).